A 263-amino-acid polypeptide reads, in one-letter code: Proteasome subunit alpha type-1 (263 aa).

Position 1 is an N-acetylmethionine (Met-1). Ser-110 bears the Phosphoserine; alternate mark. Ser-110 carries O-linked (GlcNAc) serine; alternate glycosylation. Residue Lys-115 forms a Glycyl lysine isopeptide (Lys-Gly) (interchain with G-Cter in ubiquitin) linkage. Ser-177 bears the Phosphoserine mark. Lys-208 is covalently cross-linked (Glycyl lysine isopeptide (Lys-Gly) (interchain with G-Cter in ubiquitin)). The segment at Phe-232 to His-263 is disordered. The segment covering Pro-253–His-263 has biased composition (basic and acidic residues).

The protein belongs to the peptidase T1A family. The 26S proteasome consists of a 20S proteasome core and two 19S regulatory subunits. The 20S proteasome core is a barrel-shaped complex made of 28 subunits that are arranged in four stacked rings. The two outer rings are each formed by seven alpha subunits, and the two inner rings are formed by seven beta subunits. The proteolytic activity is exerted by three beta-subunits PSMB5, PSMB6 and PSMB7. Interacts with NOTCH3. Interacts with ZFAND1.

Its subcellular location is the cytoplasm. It is found in the nucleus. Functionally, component of the 20S core proteasome complex involved in the proteolytic degradation of most intracellular proteins. This complex plays numerous essential roles within the cell by associating with different regulatory particles. Associated with two 19S regulatory particles, forms the 26S proteasome and thus participates in the ATP-dependent degradation of ubiquitinated proteins. The 26S proteasome plays a key role in the maintenance of protein homeostasis by removing misfolded or damaged proteins that could impair cellular functions, and by removing proteins whose functions are no longer required. Associated with the PA200 or PA28, the 20S proteasome mediates ubiquitin-independent protein degradation. This type of proteolysis is required in several pathways including spermatogenesis (20S-PA200 complex) or generation of a subset of MHC class I-presented antigenic peptides (20S-PA28 complex). This Bos taurus (Bovine) protein is Proteasome subunit alpha type-1 (PSMA1).